A 568-amino-acid chain; its full sequence is Sphingosine-1-phosphate lyase 1 (568 aa).

The Lumenal segment spans residues 1-41 (MPSTDLLKLKDFEPYLEILEAYSTKAKNYVNGYCTKYEPWQ). The helical; Signal-anchor for type III membrane protein transmembrane segment at 42-62 (LIAGSVLCTLLVVWVYELIFQ) threads the bilayer. The Cytoplasmic portion of the chain corresponds to 63–568 (PESLWSRFKN…NQMNGSPKPR (506 aa)). Lysine 353 bears the N6-(pyridoxal phosphate)lysine; alternate mark. N6-acetyllysine; alternate is present on lysine 353. Tyrosine 356 and tyrosine 366 each carry 3'-nitrotyrosine. Serine 564 carries the phosphoserine modification.

It belongs to the group II decarboxylase family. Sphingosine-1-phosphate lyase subfamily. As to quaternary structure, homodimer. Requires pyridoxal 5'-phosphate as cofactor.

It localises to the endoplasmic reticulum membrane. The catalysed reaction is sphinganine 1-phosphate = hexadecanal + phosphoethanolamine. It carries out the reaction sphing-4-enine 1-phosphate = (2E)-hexadecenal + phosphoethanolamine. Its pathway is lipid metabolism; sphingolipid metabolism. Functionally, cleaves phosphorylated sphingoid bases (PSBs), such as sphingosine-1-phosphate, into fatty aldehydes and phosphoethanolamine. Elevates stress-induced ceramide production and apoptosis. Required for global lipid homeostasis in liver and cholesterol homeostasis in fibroblasts. Involved in the regulation of pro-inflammatory response and neutrophil trafficking. Modulates neuronal autophagy via phosphoethanolamine production which regulates accumulation of aggregate-prone proteins such as APP. Seems to play a role in establishing neuronal contact sites and axonal maintenance. The sequence is that of Sphingosine-1-phosphate lyase 1 from Rattus norvegicus (Rat).